A 207-amino-acid polypeptide reads, in one-letter code: Ribosomal RNA large subunit methyltransferase E (207 aa).

Positions 56, 58, 76, 94, and 116 each coordinate S-adenosyl-L-methionine. Lys156 acts as the Proton acceptor in catalysis.

This sequence belongs to the class I-like SAM-binding methyltransferase superfamily. RNA methyltransferase RlmE family.

Its subcellular location is the cytoplasm. It catalyses the reaction uridine(2552) in 23S rRNA + S-adenosyl-L-methionine = 2'-O-methyluridine(2552) in 23S rRNA + S-adenosyl-L-homocysteine + H(+). Specifically methylates the uridine in position 2552 of 23S rRNA at the 2'-O position of the ribose in the fully assembled 50S ribosomal subunit. The protein is Ribosomal RNA large subunit methyltransferase E of Desulfatibacillum aliphaticivorans.